The following is a 178-amino-acid chain: Large ribosomal subunit protein uL6 (178 aa).

This sequence belongs to the universal ribosomal protein uL6 family. In terms of assembly, part of the 50S ribosomal subunit.

In terms of biological role, this protein binds to the 23S rRNA, and is important in its secondary structure. It is located near the subunit interface in the base of the L7/L12 stalk, and near the tRNA binding site of the peptidyltransferase center. This chain is Large ribosomal subunit protein uL6, found in Streptococcus pneumoniae (strain ATCC 700669 / Spain 23F-1).